Reading from the N-terminus, the 405-residue chain is Elongation factor Tu (405 aa).

One can recognise a tr-type G domain in the interval 10-215 (KPHVNIGTIG…AVDSYIPTPE (206 aa)). The G1 stretch occupies residues 19-26 (GHVDHGKT). Residue 19 to 26 (GHVDHGKT) coordinates GTP. Threonine 26 contributes to the Mg(2+) binding site. Residues 61 to 65 (GITIN) are G2. A G3 region spans residues 82–85 (DCPG). GTP is bound by residues 82–86 (DCPGH) and 137–140 (NKVD). The segment at 137–140 (NKVD) is G4. Residues 175–177 (SAL) form a G5 region.

It belongs to the TRAFAC class translation factor GTPase superfamily. Classic translation factor GTPase family. EF-Tu/EF-1A subfamily. Monomer.

It is found in the cytoplasm. It carries out the reaction GTP + H2O = GDP + phosphate + H(+). Its function is as follows. GTP hydrolase that promotes the GTP-dependent binding of aminoacyl-tRNA to the A-site of ribosomes during protein biosynthesis. In Deinococcus radiodurans (strain ATCC 13939 / DSM 20539 / JCM 16871 / CCUG 27074 / LMG 4051 / NBRC 15346 / NCIMB 9279 / VKM B-1422 / R1), this protein is Elongation factor Tu.